The sequence spans 278 residues: Keratin-associated protein 5-1 (278 aa).

8 tandem repeats follow at residues 42–45 (CCVP), 48–51 (CCKP), 130–133 (CCVP), 136–139 (CCKP), 142–145 (CCVP), 239–242 (CCKP), 258–261 (CCKP), and 268–271 (CCVP). Residues 42–271 (CCVPVCCCKP…CCSQSSCCVP (230 aa)) form an 8 X 4 AA repeats of C-C-X-P region.

The protein belongs to the KRTAP type 5 family. In terms of assembly, interacts with hair keratins. As to expression, expressed in hair root but not in skin. Expressed also in lung, pancreas, ovary, testis.

In terms of biological role, in the hair cortex, hair keratin intermediate filaments are embedded in an interfilamentous matrix, consisting of hair keratin-associated protein (KRTAP), which are essential for the formation of a rigid and resistant hair shaft through their extensive disulfide bond cross-linking with abundant cysteine residues of hair keratins. The matrix proteins include the high-sulfur and high-glycine-tyrosine keratins. The chain is Keratin-associated protein 5-1 (KRTAP5-1) from Homo sapiens (Human).